A 292-amino-acid polypeptide reads, in one-letter code: Bifunctional protein FolD (292 aa).

NADP(+)-binding positions include Gly171 to Ser173, Ile196, and Ile237.

Belongs to the tetrahydrofolate dehydrogenase/cyclohydrolase family. Homodimer.

The catalysed reaction is (6R)-5,10-methylene-5,6,7,8-tetrahydrofolate + NADP(+) = (6R)-5,10-methenyltetrahydrofolate + NADPH. It catalyses the reaction (6R)-5,10-methenyltetrahydrofolate + H2O = (6R)-10-formyltetrahydrofolate + H(+). It functions in the pathway one-carbon metabolism; tetrahydrofolate interconversion. Functionally, catalyzes the oxidation of 5,10-methylenetetrahydrofolate to 5,10-methenyltetrahydrofolate and then the hydrolysis of 5,10-methenyltetrahydrofolate to 10-formyltetrahydrofolate. This Helicobacter acinonychis (strain Sheeba) protein is Bifunctional protein FolD.